Reading from the N-terminus, the 429-residue chain is Enolase 2 (429 aa).

Gln-163 contacts (2R)-2-phosphoglycerate. The Proton donor role is filled by Glu-205. The Mg(2+) site is built by Asp-242, Glu-286, and Asp-313. Lys-338, Arg-367, Ser-368, and Lys-389 together coordinate (2R)-2-phosphoglycerate. The active-site Proton acceptor is Lys-338.

The protein belongs to the enolase family. Requires Mg(2+) as cofactor.

It is found in the cytoplasm. It localises to the secreted. The protein resides in the cell surface. It catalyses the reaction (2R)-2-phosphoglycerate = phosphoenolpyruvate + H2O. Its pathway is carbohydrate degradation; glycolysis; pyruvate from D-glyceraldehyde 3-phosphate: step 4/5. Its function is as follows. Catalyzes the reversible conversion of 2-phosphoglycerate (2-PG) into phosphoenolpyruvate (PEP). It is essential for the degradation of carbohydrates via glycolysis. The polypeptide is Enolase 2 (Lactiplantibacillus plantarum (strain ATCC BAA-793 / NCIMB 8826 / WCFS1) (Lactobacillus plantarum)).